The primary structure comprises 274 residues: Ribosomal RNA small subunit methyltransferase A (274 aa).

Positions 15, 17, 42, 64, 89, and 108 each coordinate S-adenosyl-L-methionine.

It belongs to the class I-like SAM-binding methyltransferase superfamily. rRNA adenine N(6)-methyltransferase family. RsmA subfamily.

Its subcellular location is the cytoplasm. It catalyses the reaction adenosine(1518)/adenosine(1519) in 16S rRNA + 4 S-adenosyl-L-methionine = N(6)-dimethyladenosine(1518)/N(6)-dimethyladenosine(1519) in 16S rRNA + 4 S-adenosyl-L-homocysteine + 4 H(+). Specifically dimethylates two adjacent adenosines (A1518 and A1519) in the loop of a conserved hairpin near the 3'-end of 16S rRNA in the 30S particle. May play a critical role in biogenesis of 30S subunits. This is Ribosomal RNA small subunit methyltransferase A from Prochlorococcus marinus (strain MIT 9215).